A 249-amino-acid polypeptide reads, in one-letter code: Exosome complex component Rrp4 (249 aa).

Residues 72–143 (GDTIIGLVED…RTISPVLTVK (72 aa)) enclose the S1 motif domain. A KH domain is found at 151-213 (PLGTVMDIMP…EALIEAINII (63 aa)).

This sequence belongs to the RRP4 family. Component of the archaeal exosome complex. Forms a trimer of Rrp4 and/or Csl4 subunits. The trimer associates with a hexameric ring-like arrangement composed of 3 Rrp41-Rrp42 heterodimers.

It localises to the cytoplasm. Functionally, non-catalytic component of the exosome, which is a complex involved in RNA degradation. Increases the RNA binding and the efficiency of RNA degradation. Confers strong poly(A) specificity to the exosome. This is Exosome complex component Rrp4 from Sulfolobus acidocaldarius (strain ATCC 33909 / DSM 639 / JCM 8929 / NBRC 15157 / NCIMB 11770).